The chain runs to 873 residues: Leucine--tRNA ligase (873 aa).

Residues 48 to 58 (PYPSGKLHMGH) carry the 'HIGH' region motif. Positions 636–640 (KMSKS) match the 'KMSKS' region motif. Lysine 639 is an ATP binding site.

The protein belongs to the class-I aminoacyl-tRNA synthetase family.

The protein resides in the cytoplasm. The enzyme catalyses tRNA(Leu) + L-leucine + ATP = L-leucyl-tRNA(Leu) + AMP + diphosphate. The protein is Leucine--tRNA ligase of Cupriavidus metallidurans (strain ATCC 43123 / DSM 2839 / NBRC 102507 / CH34) (Ralstonia metallidurans).